We begin with the raw amino-acid sequence, 127 residues long: LIM domain-containing protein 2 (127 aa).

M1 carries the N-acetylmethionine modification. The interval M1–V24 is disordered. The LIM zinc-binding domain maps to E38–S98. 8 residues coordinate Zn(2+): C40, C43, H61, C64, C67, C70, C88, and H91.

Interacts with ILK.

Its subcellular location is the cytoplasm. It is found in the nucleus. In terms of biological role, acts as an activator of the protein-kinase ILK, thereby regulating cell motility. The chain is LIM domain-containing protein 2 from Homo sapiens (Human).